Consider the following 167-residue polypeptide: Ureidoglycolate lyase (167 aa).

The protein belongs to the ureidoglycolate lyase family. Homodimer. The cofactor is Ni(2+).

The enzyme catalyses (S)-ureidoglycolate = urea + glyoxylate. It functions in the pathway nitrogen metabolism; (S)-allantoin degradation. Catalyzes the catabolism of the allantoin degradation intermediate (S)-ureidoglycolate, generating urea and glyoxylate. Involved in the utilization of allantoin as nitrogen source. The sequence is that of Ureidoglycolate lyase from Pseudomonas fluorescens (strain Pf0-1).